The following is a 374-amino-acid chain: Translocating chain-associated membrane protein 1 (374 aa).

At 1-29 the chain is on the cytoplasmic side; it reads MAIRKKSSKNPPVLSHEFVLQNHADIVSC. Residues 30-50 form a helical membrane-spanning segment; that stretch reads VAMVFLLGLMFEITAKVSIIF. Residues 51–81 are Lumenal-facing; the sequence is VTLQYNVTLPATEEQATESAFLYYYGIKDLA. Residue N56 is glycosylated (N-linked (GlcNAc...) asparagine). A helical transmembrane segment spans residues 82-102; it reads TVFFYMLVAIIIHAIIQEYVL. The Cytoplasmic portion of the chain corresponds to 103 to 121; it reads DKINRRMHFSKTKHSKFNE. A TLC domain is found at 117–326; the sequence is SKFNESGQLS…NFQLRRWREH (210 aa). The chain crosses the membrane as a helical span at residues 122 to 142; the sequence is SGQLSAFYLFSCIWGTFILIS. The Lumenal segment spans residues 143-159; sequence ENYISDPTILWRAYPHN. Residues 160 to 180 form a helical membrane-spanning segment; the sequence is LMTFQMKFFYISQLAYWFHAF. The Cytoplasmic segment spans residues 181 to 192; sequence PELYFQKTKKED. The chain crosses the membrane as a helical span at residues 193-213; sequence IPRQLVYIGLYLFHIAGAYLL. Residue N214 is a topological domain, lumenal. Residues 215–235 traverse the membrane as a helical segment; that stretch reads LNHLGLVLLVLHYFVEFLFHI. Topologically, residues 236 to 251 are cytoplasmic; that stretch reads SRLFYFSDEKYQKGFS. Residues 252-272 form a helical membrane-spanning segment; that stretch reads LWAVLFVLGRLLTLILSVLTV. Residues 273 to 297 lie on the Lumenal side of the membrane; that stretch reads GFGLARAENQKLDFSTGNFNVLAVR. Residues 298–318 traverse the membrane as a helical segment; it reads IAVLASICITQAFMMWKFINF. Over 319-374 the chain is Cytoplasmic; it reads QLRRWREHSAFQAPAVKKKPPVTKGRSSRKGTENGVNGTVTSNGADSPRNRKEKSS. The disordered stretch occupies residues 331-374; sequence APAVKKKPPVTKGRSSRKGTENGVNGTVTSNGADSPRNRKEKSS. The segment covering 334–347 has biased composition (basic residues); it reads VKKKPPVTKGRSSR. A compositionally biased stretch (polar residues) spans 352–363; it reads NGVNGTVTSNGA. S365 is subject to Phosphoserine.

Belongs to the TRAM family. Interacts with SEC61B. May interact with Derlin-1/DERL1. N-glycosylated.

The protein resides in the endoplasmic reticulum membrane. In terms of biological role, involved in the translocation of nascent protein chains into or through the endoplasmic reticulum (ER) membrane by facilitating the proper chain positioning at the SEC61 channel. Regulates the exposure of nascent secretory protein chain to the cytosol during translocation into the ER. May affect the phospholipid bilayer in the vicinity of the lateral gate of the SEC61 channel, thereby facilitating ER protein transport. Intimately associates with transmembrane (TM) domain of nascent membrane proteins during the entire integration process into the ER membrane. Associates with the second TM domain of G-protein-coupled receptor opsin/OPSD nascent chain in the ER membrane, which may facilitate its integration into the membrane. Under conditions of ER stress, participates in the disposal of misfolded ER membrane proteins during the unfolded protein response (UPR), an integrated stress response (ISR) pathway, by selectively retrotranslocating misfolded ER-membrane proteins from the ER into the cytosol where they are ubiquitinated and degraded by the proteasome. The protein is Translocating chain-associated membrane protein 1 (TRAM1) of Bos taurus (Bovine).